The sequence spans 341 residues: tRNA N6-adenosine threonylcarbamoyltransferase (341 aa).

Residues His-115 and His-119 each contribute to the Fe cation site. Substrate is bound by residues Ile-137 to Gly-141, Asp-170, Gly-183, Asp-187, and Asn-276. Asp-304 is a binding site for Fe cation.

The protein belongs to the KAE1 / TsaD family. Fe(2+) serves as cofactor.

It localises to the cytoplasm. The catalysed reaction is L-threonylcarbamoyladenylate + adenosine(37) in tRNA = N(6)-L-threonylcarbamoyladenosine(37) in tRNA + AMP + H(+). In terms of biological role, required for the formation of a threonylcarbamoyl group on adenosine at position 37 (t(6)A37) in tRNAs that read codons beginning with adenine. Is involved in the transfer of the threonylcarbamoyl moiety of threonylcarbamoyl-AMP (TC-AMP) to the N6 group of A37, together with TsaE and TsaB. TsaD likely plays a direct catalytic role in this reaction. The sequence is that of tRNA N6-adenosine threonylcarbamoyltransferase from Staphylococcus aureus (strain JH1).